A 479-amino-acid polypeptide reads, in one-letter code: MVPSQRLSRTSSISSNEDPAESHILELEAVSDTNTDCDLDPMEGSEEHSTDGEISSSEEEDEDPTPAHAIPARPSSVVITPTSASFVIPRKKWDLQDKTVTLHRSPLCRDEDEKEETGNSSYTRGHKRRRGEVHGCTDESYGKRRHLPPGARAPRAPRAPRVPRAPRSPRAPRSNRATRGPRSESRGAGRSTRKQARQERSQRPLPNKPWFDMSLVKPVSKITFVTLPSPLASLTLEPIQDPFLQSMLAVAAHPEIGAWQKVQPRHELRRSYKTLREFFTKSTNKDTWLDARMQAIQNAGLCTLVAMLEETIFWLQEITYHGDLPLAPAEDILLACAMSLSKVILTKLKELAPCFLPNTRDYNFVKQLFYITCATARQNKVVETLSSSYVKQPLCLLAAYAAVAPAYINANCRRRHDEVEFLGHYIKNYNPGTLSSLLTEAVETHTRDCRSASCSRLVRAILSPGTGSLGLFFVPGLNQ.

A compositionally biased stretch (low complexity) spans 1–15; sequence MVPSQRLSRTSSISS. Disordered stretches follow at residues 1 to 77 and 91 to 210; these read MVPS…PSSV and KKWD…NKPW. Acidic residues predominate over residues 35–44; sequence TDCDLDPMEG. The interval 61 to 146 is nuclear export signal and interaction with host NXF1; it reads DEDPTPAHAI…TDESYGKRRH (86 aa). The nuclear localization signal stretch occupies residues 127–130; sequence KRRR. Residues 132–142 show a composition bias toward basic and acidic residues; sequence EVHGCTDESYG. A nuclear localization signal region spans residues 143–145; sequence KRR. C354, H445, C449, and C454 together coordinate Zn(2+). The CHC2-type zinc finger occupies 354–454; sequence CFLPNTRDYN…HTRDCRSASC (101 aa).

This sequence belongs to the HHV-1 ICP27 protein family. In terms of assembly, interacts with host XPO1 and with the XPO1 export pathway components small GTPase RAN and nucleoporin NUP214. Interacts with host SPEN, OTT1 and OTT3. Interacts with host SRSF1, SRSF3, SRSF7 and SRPK1. Interacts with host DHX9; this interaction may have an inhibitory effect on virion production. Interacts (via N-terminus) with host NXF1; this interaction plays a role in mRNA export. Post-translationally, phosphorylated by cellular protein kinase CK2.

It localises to the host nucleus. Its subcellular location is the host cytoplasm. In terms of biological role, promotes the nuclear export of a subset of early and late viral mRNAs by interacting with mRNAs and cellular export proteins. Additionally may prevent the establishment of cellular antiviral state, by acting as an alternative splicing factor for cellular RNAs such as STAT1, resulting in a STAT1 mRNA incapable of producing the STAT1alpha isoform. This chain is mRNA export factor ICP27 homolog, found in Homo sapiens (Human).